Consider the following 242-residue polypeptide: N-alpha-acetyltransferase 60 (242 aa).

The Cytoplasmic segment spans residues 1–192 (MSEEERPAAL…GGHPPWTVMD (192 aa)). Residues 13-182 (TILRFLCHDD…DAYTYVLYLN (170 aa)) form the N-acetyltransferase domain. Tyr-38 is a binding site for substrate. Residue Tyr-97 is part of the active site. Residue Leu-99 participates in substrate binding. Acetyl-CoA is bound by residues 101–103 (LGV) and 109–114 (KQGIGS). Residue His-138 is part of the active site. Acetyl-CoA-binding positions include Asn-143 and 150–153 (YENR). Residues 162-173 (PYYYSIRGVLQD) form a required for homodimerization region. Substrate is bound at residue Tyr-165. The helical intramembrane region spans 193–236 (YLQHLGSALAGFSPCTLPQRIYRQAHTLLRSLLPWSSISAKSGI). The Cytoplasmic portion of the chain corresponds to 237-242 (EYSRTM).

Belongs to the acetyltransferase family. NAA60 subfamily. As to quaternary structure, monomer and homodimer; monomer in presence of substrate and homodimer in its absence.

It is found in the golgi apparatus membrane. It catalyses the reaction N-terminal L-methionyl-[transmembrane protein] + acetyl-CoA = N-terminal N(alpha)-acetyl-L-methionyl-[transmembrane protein] + CoA + H(+). The enzyme catalyses L-lysyl-[protein] + acetyl-CoA = N(6)-acetyl-L-lysyl-[protein] + CoA + H(+). Its function is as follows. N-alpha-acetyltransferase that specifically mediates the acetylation of N-terminal residues of the transmembrane proteins, with a strong preference for N-termini facing the cytosol. Displays N-terminal acetyltransferase activity towards a range of N-terminal sequences including those starting with Met-Lys, Met-Val, Met-Ala and Met-Met. Required for normal chromosomal segregation during anaphase. May also show histone acetyltransferase activity; such results are however unclear in vivo and would require additional experimental evidences. The protein is N-alpha-acetyltransferase 60 (naa60) of Xenopus tropicalis (Western clawed frog).